Consider the following 268-residue polypeptide: NH(3)-dependent NAD(+) synthetase (268 aa).

Residue 46–53 (GVSGGQDS) coordinates ATP. Aspartate 52 contacts Mg(2+). Arginine 140 provides a ligand contact to deamido-NAD(+). Threonine 160 is an ATP binding site. Residue glutamate 165 coordinates Mg(2+). Deamido-NAD(+)-binding residues include lysine 173 and aspartate 180. Lysine 189 lines the ATP pocket. 260 to 261 (HK) is a deamido-NAD(+) binding site.

It belongs to the NAD synthetase family. Homodimer.

It carries out the reaction deamido-NAD(+) + NH4(+) + ATP = AMP + diphosphate + NAD(+) + H(+). It functions in the pathway cofactor biosynthesis; NAD(+) biosynthesis; NAD(+) from deamido-NAD(+) (ammonia route): step 1/1. Catalyzes the ATP-dependent amidation of deamido-NAD to form NAD. Uses ammonia as a nitrogen source. This is NH(3)-dependent NAD(+) synthetase from Buchnera aphidicola subsp. Acyrthosiphon pisum (strain Tuc7).